The chain runs to 261 residues: MTARAAGGSASRANEYADVPEMFRELVGLPAGSPEFQRHRDKIVQRCLPLADHIARRFEGRGEPRDDLIQVARVGLVNAAVRFDVKTGSDFVSFAVPTIMGEVRRHFRDNSWSVKVPRRLKELHLRLGTATADLSQRLGRAPSASELAAELGMDRAEVIEGLLAGSSYHTLSIDSGGGSDDDARAITDTLGDVDAGLDQIENREVLRPLLEALPERERTVLVLRFFDSMTQTQIAERVGISQMHVSRLLAKSLARLRDQLE.

Residues 43-112 form a sigma-70 factor domain-2 region; the sequence is IVQRCLPLAD…VRRHFRDNSW (70 aa). The short motif at 67 to 70 is the Interaction with polymerase core subunit RpoC element; the sequence is DLIQ. Positions 123 to 189 are sigma-70 factor domain-3; the sequence is LHLRLGTATA…DDDARAITDT (67 aa). Residues 209–258 are sigma-70 factor domain-4; that stretch reads LLEALPERERTVLVLRFFDSMTQTQIAERVGISQMHVSRLLAKSLARLRD. A DNA-binding region (H-T-H motif) is located at residues 231–250; it reads QTQIAERVGISQMHVSRLLA.

It belongs to the sigma-70 factor family. Monomer. Interacts transiently with the RNA polymerase catalytic core formed by RpoA, RpoB, RpoC and RpoZ (2 alpha, 1 beta, 1 beta' and 1 omega subunit) to form the RNA polymerase holoenzyme that can initiate transcription. Interacts (via sigma-70 factor domain 4) with anti-sigma-F factor RsbW (UsfX).

In terms of biological role, sigma factors are initiation factors that promote the attachment of RNA polymerase to specific initiation sites and are then released. Held in an inactive form by a cognate anti-sigma factor RsbW (UsfX) until released. Its regulon, determined following disruption, consists of 38 genes decreased in exponential phase, 187 genes decreased in early S-phase, and 277 genes decreased in late S-phase. The chain is RNA polymerase sigma factor SigF (sigF) from Mycobacterium tuberculosis (strain CDC 1551 / Oshkosh).